The following is a 661-amino-acid chain: Fusaric acid cluster transcription factor FUB12 (661 aa).

Residues 17–48 (CVPCRTRKIKCNAAVVGLPCGSCVSRECPDEC) constitute a DNA-binding region (zn(2)-C6 fungal-type). Disordered stretches follow at residues 57–131 (TVKG…RPPG) and 151–185 (SAAQ…QLDD). Residues 73–98 (PDTNGSILSPRQQQLPTNVSRQTTDS) show a composition bias toward polar residues. Residues 99–109 (SHSDPVEESIH) are compositionally biased toward basic and acidic residues. The span at 110–119 (ASHTGSSLRN) shows a compositional bias: polar residues. Over residues 120 to 129 (DTPHSRDRRP) the composition is skewed to basic and acidic residues.

Its subcellular location is the nucleus. Its function is as follows. Transcription factor that is involved in the formation of the two Fusaric acid derivatives, dehydrofusaric acid and fusarinolic acid, serving as a detoxification mechanism. This chain is Fusaric acid cluster transcription factor FUB12, found in Gibberella fujikuroi (strain CBS 195.34 / IMI 58289 / NRRL A-6831) (Bakanae and foot rot disease fungus).